The sequence spans 261 residues: Putative carbamate hydrolase RutD (261 aa).

In terms of domain architecture, AB hydrolase-1 spans 14–119 (PTILLSSGLG…LINAWSKADP (106 aa)).

Belongs to the AB hydrolase superfamily. Hydrolase RutD family.

It carries out the reaction carbamate + 2 H(+) = NH4(+) + CO2. Involved in pyrimidine catabolism. May facilitate the hydrolysis of carbamate, a reaction that can also occur spontaneously. In Agrobacterium fabrum (strain C58 / ATCC 33970) (Agrobacterium tumefaciens (strain C58)), this protein is Putative carbamate hydrolase RutD.